Consider the following 562-residue polypeptide: UPF0649 protein C1442.02 (562 aa).

Ser-285 and Ser-286 each carry phosphoserine. The segment at 288–308 is disordered; that stretch reads DEEIAKNADVPAEVDNNSTKA.

Belongs to the UPF0649 family.

It is found in the cytoplasm. It localises to the nucleus. This Schizosaccharomyces pombe (strain 972 / ATCC 24843) (Fission yeast) protein is UPF0649 protein C1442.02.